Reading from the N-terminus, the 93-residue chain is Cell division protein FtsB (93 aa).

At 1–3 the chain is on the cytoplasmic side; that stretch reads MRI. The helical transmembrane segment at 4–21 threads the bilayer; the sequence is FVIALTLLFGWLQYTLWF. The Periplasmic portion of the chain corresponds to 22–93; the sequence is GKNGVSDYYT…FYRIVDEEEH (72 aa). The stretch at 31-75 forms a coiled coil; it reads TVEDEIEVQQQVNSKLQARNNEMFAEIDDLRQGLDAIEERARHEL.

The protein belongs to the FtsB family. In terms of assembly, part of a complex composed of FtsB, FtsL and FtsQ.

It localises to the cell inner membrane. Functionally, essential cell division protein. May link together the upstream cell division proteins, which are predominantly cytoplasmic, with the downstream cell division proteins, which are predominantly periplasmic. The chain is Cell division protein FtsB from Vibrio campbellii (strain ATCC BAA-1116).